We begin with the raw amino-acid sequence, 159 residues long: Kojic acid related protein 6 (159 aa).

Negatively regulates mycelium growth and conidial formation and is required for stress tolerance. Plays a role in kojic acid synthesis in coordination with kojA, kojR and kojT where it acts upstream of kojA. The polypeptide is Kojic acid related protein 6 (Aspergillus oryzae (strain ATCC 42149 / RIB 40) (Yellow koji mold)).